Here is a 632-residue protein sequence, read N- to C-terminus: Lipoma-preferred partner homolog (632 aa).

Disordered regions lie at residues methionine 1–leucine 118 and serine 135–asparagine 249. Over residues threonine 26–glutamine 40 the composition is skewed to polar residues. Positions proline 41–proline 53 are enriched in low complexity. Position 109 is an N6-acetyllysine (lysine 109). Phosphoserine is present on residues serine 117 and serine 152. The span at proline 144–threonine 160 shows a compositional bias: low complexity. Composition is skewed to polar residues over residues proline 172–lysine 182 and serine 206–glutamine 239. Tyrosine 241 is modified (phosphotyrosine). Arginine 246 is modified (omega-N-methylarginine). Lysine 324 is covalently cross-linked (Glycyl lysine isopeptide (Lys-Gly) (interchain with G-Cter in SUMO1)). 3 consecutive LIM zinc-binding domains span residues glycine 434 to leucine 493, glutamate 494 to proline 554, and arginine 555 to valine 623.

This sequence belongs to the zyxin/ajuba family. As to quaternary structure, interacts with PDZ domains of SCRIB, with VASP and with ACTN1/alpha-actinin.

It localises to the nucleus. Its subcellular location is the cytoplasm. The protein localises to the cell junction. Functionally, may play a structural role at sites of cell adhesion in maintaining cell shape and motility. In addition to these structural functions, it may also be implicated in signaling events and activation of gene transcription. May be involved in signal transduction from cell adhesion sites to the nucleus allowing successful integration of signals arising from soluble factors and cell-cell adhesion. Also suggested to serve as a scaffold protein upon which distinct protein complexes are assembled in the cytoplasm and in the nucleus. This chain is Lipoma-preferred partner homolog (Lpp), found in Rattus norvegicus (Rat).